The chain runs to 421 residues: D-amino acid dehydrogenase (421 aa).

3–17 (VIVLGSGVIGVASAY) lines the FAD pocket.

It belongs to the DadA oxidoreductase family. Requires FAD as cofactor.

The catalysed reaction is a D-alpha-amino acid + A + H2O = a 2-oxocarboxylate + AH2 + NH4(+). It participates in amino-acid degradation; D-alanine degradation; NH(3) and pyruvate from D-alanine: step 1/1. Functionally, oxidative deamination of D-amino acids. The chain is D-amino acid dehydrogenase from Acinetobacter baumannii (strain AB307-0294).